The primary structure comprises 426 residues: L-cysteine:1D-myo-inositol 2-amino-2-deoxy-alpha-D-glucopyranoside ligase (426 aa).

Position 43 (C43) interacts with Zn(2+). L-cysteinyl-5'-AMP contacts are provided by residues 43 to 46 (CGIT), S58, and 81 to 83 (NVT). The 'HIGH' region signature appears at 45–55 (ITPYDATHMGH). Positions 200-205 (ERGGDP) match the 'ERGGDP' region motif. W241 provides a ligand contact to L-cysteinyl-5'-AMP. C245 is a Zn(2+) binding site. L-cysteinyl-5'-AMP is bound at residue 263–265 (GSD). H270 serves as a coordination point for Zn(2+). V296 is a binding site for L-cysteinyl-5'-AMP. A 'KMSKS' region motif is present at residues 302 to 306 (KMSKS).

This sequence belongs to the class-I aminoacyl-tRNA synthetase family. MshC subfamily. As to quaternary structure, monomer. Zn(2+) is required as a cofactor.

It catalyses the reaction 1D-myo-inositol 2-amino-2-deoxy-alpha-D-glucopyranoside + L-cysteine + ATP = 1D-myo-inositol 2-(L-cysteinylamino)-2-deoxy-alpha-D-glucopyranoside + AMP + diphosphate + H(+). Functionally, catalyzes the ATP-dependent condensation of GlcN-Ins and L-cysteine to form L-Cys-GlcN-Ins. The polypeptide is L-cysteine:1D-myo-inositol 2-amino-2-deoxy-alpha-D-glucopyranoside ligase (Arthrobacter sp. (strain FB24)).